A 321-amino-acid chain; its full sequence is Glucokinase (321 aa).

An ATP-binding site is contributed by 8–13 (GDVGGT).

This sequence belongs to the bacterial glucokinase family.

It localises to the cytoplasm. It carries out the reaction D-glucose + ATP = D-glucose 6-phosphate + ADP + H(+). This is Glucokinase from Salmonella typhi.